The primary structure comprises 927 residues: Probable dipeptidyl-aminopeptidase B (927 aa).

2 disordered regions span residues 1-44 and 58-101; these read MAPA…TTSI and GHFE…KNDG. Residues 1-108 lie on the Cytoplasmic side of the membrane; the sequence is MAPAPGMAPY…NDGMNRGMRR (108 aa). 2 stretches are compositionally biased toward basic and acidic residues: residues 19–36 and 58–70; these read HRPE…HESE and GHFE…PMKE. Residues 109 to 129 traverse the membrane as a helical; Signal-anchor for type II membrane protein segment; the sequence is TLIIVAGLLISAWVVGLFFYV. The Vacuolar segment spans residues 130–927; sequence SHKSYKPASQ…RSIQPILPIL (798 aa). Residues Asn-365 and Asn-530 are each glycosylated (N-linked (GlcNAc...) asparagine). Ser-769 (charge relay system) is an active-site residue. A glycan (N-linked (GlcNAc...) asparagine) is linked at Asn-828. Active-site charge relay system residues include Asp-846 and His-879.

This sequence belongs to the peptidase S9B family.

It is found in the vacuole membrane. The catalysed reaction is Release of an N-terminal dipeptide, Xaa-Yaa-|-Zaa-, from a polypeptide, preferentially when Yaa is Pro, provided Zaa is neither Pro nor hydroxyproline.. Functionally, type IV dipeptidyl-peptidase which removes N-terminal dipeptides sequentially from polypeptides having unsubstituted N-termini provided that the penultimate residue is proline. The protein is Probable dipeptidyl-aminopeptidase B (DAPB) of Podospora anserina (strain S / ATCC MYA-4624 / DSM 980 / FGSC 10383) (Pleurage anserina).